Here is a 422-residue protein sequence, read N- to C-terminus: Imidazolonepropionase (422 aa).

Fe(3+)-binding residues include histidine 82 and histidine 84. Positions 82 and 84 each coordinate Zn(2+). 4-imidazolone-5-propanoate-binding residues include arginine 91, tyrosine 154, and histidine 187. Tyrosine 154 lines the N-formimidoyl-L-glutamate pocket. Histidine 252 is a Fe(3+) binding site. Histidine 252 contacts Zn(2+). Glutamate 255 lines the 4-imidazolone-5-propanoate pocket. Aspartate 327 contacts Fe(3+). Aspartate 327 serves as a coordination point for Zn(2+). N-formimidoyl-L-glutamate contacts are provided by asparagine 329 and glycine 331. Serine 332 contacts 4-imidazolone-5-propanoate.

The protein belongs to the metallo-dependent hydrolases superfamily. HutI family. Zn(2+) serves as cofactor. It depends on Fe(3+) as a cofactor.

The protein resides in the cytoplasm. The enzyme catalyses 4-imidazolone-5-propanoate + H2O = N-formimidoyl-L-glutamate. Its pathway is amino-acid degradation; L-histidine degradation into L-glutamate; N-formimidoyl-L-glutamate from L-histidine: step 3/3. Its function is as follows. Catalyzes the hydrolytic cleavage of the carbon-nitrogen bond in imidazolone-5-propanoate to yield N-formimidoyl-L-glutamate. It is the third step in the universal histidine degradation pathway. This is Imidazolonepropionase from Alkaliphilus oremlandii (strain OhILAs) (Clostridium oremlandii (strain OhILAs)).